The primary structure comprises 543 residues: Excitatory amino acid transporter 1 (543 aa).

At 1-47 (MTKSNGEEPRMGSRMERFQQGVRKRTLLAKKKVQNITKEDVKSYLFR) the chain is on the cytoplasmic side. Residues 48-68 (NAFVLLTVSAVIVGTILGFAL) traverse the membrane as a helical segment. Residues 69-86 (RPYKMSYREVKYFSFPGE) are Extracellular-facing. The helical transmembrane segment at 87–108 (LLMRMLQMLVLPLIISSLVTGM) threads the bilayer. Over 109-122 (AALDSKASGKMGMR) the chain is Cytoplasmic. A helical membrane pass occupies residues 123–145 (AVVYYMTTTIIAVVIGIIIVIII). Over 146–236 (HPGKGTKENM…IREEMVPVPG (91 aa)) the chain is Extracellular. A helical membrane pass occupies residues 237 to 260 (SVNGVNALGLVVFSMCFGFVIGNM). Residues 261-269 (KEQGQALRE) are Cytoplasmic-facing. The helical transmembrane segment at 270–297 (FFDSLNEAIMRLVAVIMWYAPLGILFLI) threads the bilayer. Topologically, residues 298–318 (AGKILEMEDMGVIGGQLAMYT) are extracellular. A helical membrane pass occupies residues 319 to 340 (VTVIVGLLIHAVIVLPLLYFLV). Topologically, residues 341–345 (TRKNP) are cytoplasmic. Positions 346 to 376 (WVFIGGLLQALITALGTSSSSATLPITFKCL) form an intramembrane region, discontinuously helical. Residue 363 to 365 (SSS) participates in L-aspartate binding. Residues 377–385 (EENNGVDKR) lie on the Cytoplasmic side of the membrane. A helical transmembrane segment spans residues 386 to 412 (ITRFVLPVGATINMDGTALYEALAAIF). Residues Gly-394, Thr-396, and Asn-398 each coordinate Na(+). Residue Thr-402 coordinates L-aspartate. Residues 413–425 (IAQVNNFDLNFGQ) are Extracellular-facing. Positions 426–459 (IITISITATAASIGAAGIPQAGLVTMVIVLTSVG) form an intramembrane region, discontinuously helical. Position 443 to 447 (443 to 447 (IPQAG)) interacts with L-aspartate. Residues 460–472 (LPTDDITLIIAVD) are Extracellular-facing. Residues 473 to 494 (WFLDRLRTTTNVLGDSLGAGIV) form a helical membrane-spanning segment. The L-aspartate site is built by Asp-476 and Asn-483. Asn-483 and Asp-487 together coordinate Na(+). Residues 495–543 (EHLSRHELKNRDVEMGNSVIEENEMKKPYQLIAQDNEPEKPVADSETKM) are Cytoplasmic-facing. At Ser-512 the chain carries Phosphoserine. The disordered stretch occupies residues 522 to 543 (PYQLIAQDNEPEKPVADSETKM). The span at 531 to 543 (EPEKPVADSETKM) shows a compositional bias: basic and acidic residues.

This sequence belongs to the dicarboxylate/amino acid:cation symporter (DAACS) (TC 2.A.23) family. SLC1A3 subfamily. In terms of assembly, homotrimer. Glycosylated. Detected in brain and cerebellum. Both isoform GLAST-1 and GLAST-1A are expressed in bone and brain. In brain isoform GLAST-1 is highly enriched in the Purkinje cell layer in cerebellum.

Its subcellular location is the cell membrane. The catalysed reaction is K(+)(in) + L-glutamate(out) + 3 Na(+)(out) + H(+)(out) = K(+)(out) + L-glutamate(in) + 3 Na(+)(in) + H(+)(in). The enzyme catalyses K(+)(in) + L-aspartate(out) + 3 Na(+)(out) + H(+)(out) = K(+)(out) + L-aspartate(in) + 3 Na(+)(in) + H(+)(in). It carries out the reaction D-aspartate(out) + K(+)(in) + 3 Na(+)(out) + H(+)(out) = D-aspartate(in) + K(+)(out) + 3 Na(+)(in) + H(+)(in). Its function is as follows. Sodium-dependent, high-affinity amino acid transporter that mediates the uptake of L-glutamate and also L-aspartate and D-aspartate. Functions as a symporter that transports one amino acid molecule together with two or three Na(+) ions and one proton, in parallel with the counter-transport of one K(+) ion. Plays a redundant role in the rapid removal of released glutamate from the synaptic cleft, which is essential for terminating the postsynaptic action of glutamate. In Rattus norvegicus (Rat), this protein is Excitatory amino acid transporter 1 (Slc1a3).